A 140-amino-acid chain; its full sequence is Putative pre-16S rRNA nuclease (140 aa).

The protein belongs to the YqgF nuclease family.

The protein resides in the cytoplasm. Functionally, could be a nuclease involved in processing of the 5'-end of pre-16S rRNA. The polypeptide is Putative pre-16S rRNA nuclease (Yersinia pseudotuberculosis serotype O:1b (strain IP 31758)).